A 265-amino-acid polypeptide reads, in one-letter code: Type III pantothenate kinase (265 aa).

6–13 lines the ATP pocket; sequence DVGNTHTV. 112 to 115 contributes to the substrate binding site; that stretch reads GADR. Asp-114 functions as the Proton acceptor in the catalytic mechanism. A K(+)-binding site is contributed by Asp-134. Thr-137 contributes to the ATP binding site. Residue Thr-189 participates in substrate binding.

It belongs to the type III pantothenate kinase family. In terms of assembly, homodimer. Requires NH4(+) as cofactor. K(+) serves as cofactor.

The protein resides in the cytoplasm. It catalyses the reaction (R)-pantothenate + ATP = (R)-4'-phosphopantothenate + ADP + H(+). It participates in cofactor biosynthesis; coenzyme A biosynthesis; CoA from (R)-pantothenate: step 1/5. Functionally, catalyzes the phosphorylation of pantothenate (Pan), the first step in CoA biosynthesis. This is Type III pantothenate kinase from Streptomyces coelicolor (strain ATCC BAA-471 / A3(2) / M145).